Reading from the N-terminus, the 271-residue chain is Tryptophan synthase alpha chain (271 aa).

Active-site proton acceptor residues include Glu59 and Asp70.

This sequence belongs to the TrpA family. Tetramer of two alpha and two beta chains.

The catalysed reaction is (1S,2R)-1-C-(indol-3-yl)glycerol 3-phosphate + L-serine = D-glyceraldehyde 3-phosphate + L-tryptophan + H2O. Its pathway is amino-acid biosynthesis; L-tryptophan biosynthesis; L-tryptophan from chorismate: step 5/5. The alpha subunit is responsible for the aldol cleavage of indoleglycerol phosphate to indole and glyceraldehyde 3-phosphate. This chain is Tryptophan synthase alpha chain, found in Methanosarcina mazei (strain ATCC BAA-159 / DSM 3647 / Goe1 / Go1 / JCM 11833 / OCM 88) (Methanosarcina frisia).